The primary structure comprises 164 residues: Crossover junction endodeoxyribonuclease RuvC (164 aa).

Residues Asp-7, Glu-67, and Asp-140 contribute to the active site. Positions 7, 67, and 140 each coordinate Mg(2+).

It belongs to the RuvC family. Homodimer which binds Holliday junction (HJ) DNA. The HJ becomes 2-fold symmetrical on binding to RuvC with unstacked arms; it has a different conformation from HJ DNA in complex with RuvA. In the full resolvosome a probable DNA-RuvA(4)-RuvB(12)-RuvC(2) complex forms which resolves the HJ. The cofactor is Mg(2+).

It is found in the cytoplasm. It catalyses the reaction Endonucleolytic cleavage at a junction such as a reciprocal single-stranded crossover between two homologous DNA duplexes (Holliday junction).. In terms of biological role, the RuvA-RuvB-RuvC complex processes Holliday junction (HJ) DNA during genetic recombination and DNA repair. Endonuclease that resolves HJ intermediates. Cleaves cruciform DNA by making single-stranded nicks across the HJ at symmetrical positions within the homologous arms, yielding a 5'-phosphate and a 3'-hydroxyl group; requires a central core of homology in the junction. The consensus cleavage sequence is 5'-(A/T)TT(C/G)-3'. Cleavage occurs on the 3'-side of the TT dinucleotide at the point of strand exchange. HJ branch migration catalyzed by RuvA-RuvB allows RuvC to scan DNA until it finds its consensus sequence, where it cleaves and resolves the cruciform DNA. The polypeptide is Crossover junction endodeoxyribonuclease RuvC (Finegoldia magna (strain ATCC 29328 / DSM 20472 / WAL 2508) (Peptostreptococcus magnus)).